A 276-amino-acid polypeptide reads, in one-letter code: 3-methyl-2-oxobutanoate hydroxymethyltransferase (276 aa).

2 residues coordinate Mg(2+): Asp45 and Asp84. Residues Asp45–Ser46, Asp84, and Lys114 each bind 3-methyl-2-oxobutanoate. A Mg(2+)-binding site is contributed by Glu116. Glu183 (proton acceptor) is an active-site residue.

It belongs to the PanB family. In terms of assembly, homodecamer; pentamer of dimers. It depends on Mg(2+) as a cofactor.

Its subcellular location is the cytoplasm. The enzyme catalyses 3-methyl-2-oxobutanoate + (6R)-5,10-methylene-5,6,7,8-tetrahydrofolate + H2O = 2-dehydropantoate + (6S)-5,6,7,8-tetrahydrofolate. It participates in cofactor biosynthesis; (R)-pantothenate biosynthesis; (R)-pantoate from 3-methyl-2-oxobutanoate: step 1/2. Catalyzes the reversible reaction in which hydroxymethyl group from 5,10-methylenetetrahydrofolate is transferred onto alpha-ketoisovalerate to form ketopantoate. The chain is 3-methyl-2-oxobutanoate hydroxymethyltransferase from Carboxydothermus hydrogenoformans (strain ATCC BAA-161 / DSM 6008 / Z-2901).